A 605-amino-acid polypeptide reads, in one-letter code: Alpha-fetoprotein (605 aa).

The first 18 residues, 1–18 (MKWITPASLILLLHFAAS), serve as a signal peptide directing secretion. 3 Albumin domains span residues 19–207 (KALH…SIAK), 208–398 (ELRE…EELQ), and 399–597 (KHIE…KLIS). 8 cysteine pairs are disulfide-bonded: cysteine 95–cysteine 110, cysteine 109–cysteine 120, cysteine 144–cysteine 189, cysteine 188–cysteine 197, cysteine 220–cysteine 266, cysteine 265–cysteine 273, cysteine 285–cysteine 299, and cysteine 298–cysteine 309. Phosphoserine is present on residues serine 107, serine 111, and serine 113. N-linked (GlcNAc...) asparagine glycosylation is present at asparagine 247. Residue serine 340 is modified to Phosphoserine. 7 disulfide bridges follow: cysteine 380/cysteine 389, cysteine 412/cysteine 458, cysteine 457/cysteine 468, cysteine 481/cysteine 497, cysteine 496/cysteine 507, cysteine 534/cysteine 579, and cysteine 578/cysteine 587. A Phosphoserine modification is found at serine 440. A glycan (N-linked (GlcNAc...) asparagine) is linked at asparagine 498.

Belongs to the ALB/AFP/VDB family. In terms of processing, glycosylated; contains two glycans. Post-translationally, sulfated. As to expression, plasma.

Its subcellular location is the secreted. Binds estrogens, fatty acids and metals. The polypeptide is Alpha-fetoprotein (Afp) (Mus musculus (Mouse)).